Reading from the N-terminus, the 384-residue chain is Protein V (384 aa).

Disordered regions lie at residues 1-23 (MDQD…GGRE) and 38-318 (SEPT…KKGH). The span at 7-20 (ILKEDSEVEREAPG) shows a compositional bias: basic and acidic residues. The segment covering 50–59 (LHNTINTPQG) has biased composition (polar residues). Serine 68 bears the Phosphoserine; by host mark. Over residues 83 to 101 (RSGEESRVSGRTSKPEAEA) the composition is skewed to basic and acidic residues. Residue serine 125 is modified to Phosphoserine; by host. Over residues 150-168 (GIEDENREMAAHPDKRGED) the composition is skewed to basic and acidic residues. A compositionally biased stretch (polar residues) spans 191–206 (ASNNGRSMEPGSSHSA). Phosphoserine; by host occurs at positions 192, 249, 257, and 260. 8 residues coordinate Zn(2+): histidine 318, cysteine 337, cysteine 341, cysteine 353, cysteine 355, cysteine 358, cysteine 362, and cysteine 365.

The protein belongs to the paramyxoviruses V protein family. Interacts with host IFIH1/MDA5 and DHX58/LGP2. Interacts with host IRF3. Interacts with host RIGI regulatory protein (via CARDs domain) and host TRIM25 (via SPRY domain); these interactions prevent TRIM25-mediated ubiquitination of RIG-I and disrupts downstream RIG-I signaling.

Its subcellular location is the host cytoplasm. Its function is as follows. Plays an essential role in the inhibition of host immune response. Prevents the establishment of cellular antiviral state by blocking interferon-alpha/beta (IFN-alpha/beta) production and signaling pathway. Interacts with host IFIH1/MDA5 and DHX58/LGP2 to inhibit the transduction pathway involved in the activation of IFN-beta promoter, thus protecting the virus against cell antiviral state. Also interacts with and inhibits host IRF3. Blocks the type I interferon signaling pathway by disrupting the RIG-I signaling pathway. This chain is Protein V (P/V/C), found in Sendai virus (strain Harris) (SeV).